A 678-amino-acid chain; its full sequence is SPS-sensor component PTR3 (678 aa).

2 disordered regions span residues 111–158 (TGQG…SDPT) and 179–211 (ANTE…SSLL). Positions 127–144 (TSPSSSSLSLTPSRSSST) are enriched in low complexity. A compositionally biased stretch (basic and acidic residues) spans 149–158 (ADNKTLSDPT). Residues 179 to 194 (ANTEVGSDHPLTTGTT) are compositionally biased toward polar residues.

In terms of assembly, homodimer. Component of the plasma membrane SPS (SSY1-PTR3-SSY5) amino acid sensor complex. Interacts directly with SSY1 and SSY5. Post-translationally, hyperphosphorylated in response to extracellular amino acids and dependent on the amino acid sensor component SSY1. Phosphorylation is positively regulated by casein kinases YCK1 and YCK2, and negatively regulated by phosphatase PP2A regulatory subunit RTS1.

Its subcellular location is the cell membrane. Component of the SPS-sensor system, which regulates the expression of several amino acid-metabolizing enzymes and amino acid- and peptide-permeases in response to extracellular amino acid levels by controlling the activity of two transcription factors, STP1 and STP2. The protein is SPS-sensor component PTR3 (PTR3) of Saccharomyces cerevisiae (strain ATCC 204508 / S288c) (Baker's yeast).